Here is a 1901-residue protein sequence, read N- to C-terminus: Methylcytosine dioxygenase tet3 (1901 aa).

The CXXC-type zinc-finger motif lies at 58–99 (SNKKRKRCGVCVPCLRKEPCGACYNCVNRSTSHQICKMRKCE). The Zn(2+) site is built by Cys-65, Cys-68, Cys-71, Cys-77, Cys-80, Cys-83, Cys-93, and Cys-98. 4 disordered regions span residues 434–455 (KNAL…KKSS), 602–658 (WWVP…EGSA), 751–787 (KDQC…QNDL), and 808–867 (DFSL…PVSR). Polar residues-rich tracts occupy residues 442–455 (SPRQ…KKSS) and 602–614 (WWVP…PVSK). Basic residues predominate over residues 640-652 (KPQRKQVQIKKPK). A compositionally biased stretch (low complexity) spans 758–771 (STHDTSSSSGQGDS). Positions 847 to 867 (ENSTKPATHSNPALSNNPVSR) are enriched in polar residues. Zn(2+)-binding residues include Cys-957, Cys-959, Cys-1017, His-1043, and Cys-1045. Position 1085 (Arg-1085) interacts with 2-oxoglutarate. Residues Cys-1095, Cys-1097, Cys-1113, Cys-1122, and Cys-1182 each contribute to the Zn(2+) site. Cys-1198 is a binding site for 2-oxoglutarate. His-1204 contributes to the Zn(2+) binding site. 2 residues coordinate Fe cation: His-1206 and Asp-1208. His-1240 is a binding site for 2-oxoglutarate. 4 disordered regions span residues 1282–1338 (SEPA…QQTK), 1457–1501 (YGSE…VETT), 1591–1624 (SNAP…PGKV), and 1680–1745 (SATP…DEEI). Residues 1291–1325 (RQLEAKKAAAEKKKLQKEKLVSPDKTKQEPSDKKT) show a composition bias toward basic and acidic residues. Positions 1326 to 1338 (CQQNPGVPQQQTK) are enriched in polar residues. Positions 1465–1474 (SFRRSSEVPH) are enriched in basic and acidic residues. Residues 1477 to 1487 (SLQNPSSQKSV) are compositionally biased toward polar residues. Composition is skewed to polar residues over residues 1680–1693 (SATP…TPCS) and 1702–1719 (SFPN…SQNH). Residue His-1780 coordinates Fe cation. Residue 1795-1797 (RIS) participates in 2-oxoglutarate binding.

The protein belongs to the TET family. Fe(2+) serves as cofactor. Requires Zn(2+) as cofactor.

It is found in the nucleus. Its subcellular location is the chromosome. It catalyses the reaction a 5-methyl-2'-deoxycytidine in DNA + 2-oxoglutarate + O2 = a 5-hydroxymethyl-2'-deoxycytidine in DNA + succinate + CO2. The catalysed reaction is a 5-hydroxymethyl-2'-deoxycytidine in DNA + 2-oxoglutarate + O2 = a 5-formyl-2'-deoxycytidine in DNA + succinate + CO2 + H2O. The enzyme catalyses a 5-formyl-2'-deoxycytidine in DNA + 2-oxoglutarate + O2 = a 5-carboxyl-2'-deoxycytidine in DNA + succinate + CO2 + H(+). Dioxygenase that catalyzes the conversion of the modified genomic base 5-methylcytosine (5mC) into 5-hydroxymethylcytosine (5hmC) and plays a key role in epigenetic chromatin reprogramming during embryonic development. Conversion of 5mC into 5hmC probably constitutes the first step in cytosine demethylation. Selectively binds to the promoter region of target genes and contributes to regulate the expression of numerous developmental genes, including pax6, rax, sox9 and six3. May also contribute to the regulation of target genes in ways that do not require its enzyme activity. The polypeptide is Methylcytosine dioxygenase tet3 (Xenopus tropicalis (Western clawed frog)).